We begin with the raw amino-acid sequence, 320 residues long: Dipeptide transport system permease protein DppC (320 aa).

Helical transmembrane passes span 56 to 76 (LAMA…IGPF), 121 to 141 (LFVG…YGGV), 154 to 176 (MRII…MVLM), 230 to 252 (LLPN…AIFA), 267 to 287 (FASW…GHWW), and 289 to 309 (LFFP…LGDG). Residues 117–307 (ARISLFVGVM…LTMYAFNVLG (191 aa)) enclose the ABC transmembrane type-1 domain.

It belongs to the binding-protein-dependent transport system permease family. OppBC subfamily.

It localises to the cell membrane. Functionally, probably part of the ABC transporter DppBCDE involved in dipeptide transport. Responsible for the translocation of the substrate across the membrane. In Bacillus subtilis (strain 168), this protein is Dipeptide transport system permease protein DppC (dppC).